The chain runs to 306 residues: MTNEFLHFEKISRQTWQSLHRKTTPPLTEEELESIKSFNDQISLQDVTDIYLPLAHLIQIYKRTKEDLAFSKGIFLQRESKSQPFIIGVSGSVAVGKSTTSRLLQILLSRTFTDATVELVTTDGFLYPNQTLIEQGILNRKGFPESYDMEALLNFLDRIKNGQDVDIPVYSHEVYDIVPEEKQSVKAADFVIVEGINVFQNPQNDRLYITDFFDFSIYVDAGVDDIESWYLDRFLKMLSLAQNDPDSYYYRFTQMPIGEVESFAHQVWISINLTNLQNYIEPTRNRAEVILHKSKNHEIDEIYLKK.

91-98 (GSVAVGKS) is an ATP binding site.

The protein belongs to the prokaryotic pantothenate kinase family.

The protein resides in the cytoplasm. The enzyme catalyses (R)-pantothenate + ATP = (R)-4'-phosphopantothenate + ADP + H(+). The protein operates within cofactor biosynthesis; coenzyme A biosynthesis; CoA from (R)-pantothenate: step 1/5. The polypeptide is Pantothenate kinase (coaA) (Streptococcus pneumoniae serotype 4 (strain ATCC BAA-334 / TIGR4)).